The chain runs to 81 residues: YcgL domain-containing protein Tgr7_3126 (81 aa).

Positions 1 to 81 (MQVYVYKSRR…QMPPQNERPL (81 aa)) constitute a YcgL domain.

The sequence is that of YcgL domain-containing protein Tgr7_3126 from Thioalkalivibrio sulfidiphilus (strain HL-EbGR7).